A 557-amino-acid chain; its full sequence is Formate--tetrahydrofolate ligase 2 (557 aa).

66–73 (TPAGEGKT) serves as a coordination point for ATP.

The protein belongs to the formate--tetrahydrofolate ligase family.

It carries out the reaction (6S)-5,6,7,8-tetrahydrofolate + formate + ATP = (6R)-10-formyltetrahydrofolate + ADP + phosphate. Its pathway is one-carbon metabolism; tetrahydrofolate interconversion. The chain is Formate--tetrahydrofolate ligase 2 from Streptococcus pyogenes serotype M12 (strain MGAS9429).